Consider the following 712-residue polypeptide: Protein phosphatase 1 regulatory subunit 37 (712 aa).

A compositionally biased stretch (pro residues) spans 1–12 (MEIPPQEAPPGP). Residues 1 to 47 (MEIPPQEAPPGPGADADADAEAETEEASAEAESPTGTSPPADGRLKA) form a disordered region. Positions 16-29 (ADADAEAETEEASA) are enriched in acidic residues. Phosphoserine is present on residues Ser-56 and Ser-62. LRR repeat units follow at residues 226–246 (SLAV…MLLA), 254–275 (NLRE…AQLG), 283–303 (SLQI…AYIC), 312–332 (GLVT…AFLG), and 340–360 (SLET…RNLK). The tract at residues 492–680 (ESGELPAVGS…PPGLEAKGGS (189 aa)) is disordered. A compositionally biased stretch (acidic residues) spans 514 to 531 (SDSDSDSDREEQEEEEED). At Ser-583 the chain carries Phosphoserine. The span at 605 to 626 (PPVPPTFVSSPPPSPPSPPASP) shows a compositional bias: pro residues. The segment covering 639-651 (SEAQPQLEPSQAG) has biased composition (polar residues).

This sequence belongs to the PPP1R37 family. Interacts with PPP1CA.

In terms of biological role, inhibits phosphatase activity of protein phosphatase 1 (PP1) complexes. This Mus musculus (Mouse) protein is Protein phosphatase 1 regulatory subunit 37 (Ppp1r37).